The primary structure comprises 119 residues: Large ribosomal subunit protein uL22 (119 aa).

The protein belongs to the universal ribosomal protein uL22 family. In terms of assembly, part of the 50S ribosomal subunit.

This protein binds specifically to 23S rRNA; its binding is stimulated by other ribosomal proteins, e.g. L4, L17, and L20. It is important during the early stages of 50S assembly. It makes multiple contacts with different domains of the 23S rRNA in the assembled 50S subunit and ribosome. Its function is as follows. The globular domain of the protein is located near the polypeptide exit tunnel on the outside of the subunit, while an extended beta-hairpin is found that lines the wall of the exit tunnel in the center of the 70S ribosome. This is Large ribosomal subunit protein uL22 from Chlorobaculum tepidum (strain ATCC 49652 / DSM 12025 / NBRC 103806 / TLS) (Chlorobium tepidum).